Consider the following 293-residue polypeptide: Ribosomal protein L11 methyltransferase (293 aa).

Residues T145, G166, D188, and N230 each contribute to the S-adenosyl-L-methionine site.

This sequence belongs to the methyltransferase superfamily. PrmA family.

The protein resides in the cytoplasm. It carries out the reaction L-lysyl-[protein] + 3 S-adenosyl-L-methionine = N(6),N(6),N(6)-trimethyl-L-lysyl-[protein] + 3 S-adenosyl-L-homocysteine + 3 H(+). Functionally, methylates ribosomal protein L11. In Escherichia coli O139:H28 (strain E24377A / ETEC), this protein is Ribosomal protein L11 methyltransferase.